Here is a 363-residue protein sequence, read N- to C-terminus: F-box protein At3g44326 (363 aa).

Residues Met-1–Ala-23 are disordered. The region spanning Asp-27 to Cys-66 is the F-box domain.

The sequence is that of F-box protein At3g44326 from Arabidopsis thaliana (Mouse-ear cress).